Reading from the N-terminus, the 230-residue chain is Ribose-5-phosphate isomerase A (230 aa).

Substrate is bound by residues 29–32, 86–89, and 99–102; these read SGST, DGAD, and KGGG. The active-site Proton acceptor is the E108. Residue K126 coordinates substrate.

Belongs to the ribose 5-phosphate isomerase family. As to quaternary structure, homodimer.

The catalysed reaction is aldehydo-D-ribose 5-phosphate = D-ribulose 5-phosphate. The protein operates within carbohydrate degradation; pentose phosphate pathway; D-ribose 5-phosphate from D-ribulose 5-phosphate (non-oxidative stage): step 1/1. Its function is as follows. Catalyzes the reversible conversion of ribose-5-phosphate to ribulose 5-phosphate. This Desulfatibacillum aliphaticivorans protein is Ribose-5-phosphate isomerase A.